Reading from the N-terminus, the 332-residue chain is ATPase GET3 (332 aa).

32–39 (KGGVGKTT) contributes to the ATP binding site. The active site involves Asp61. ATP contacts are provided by Glu235 and Asn262. Cys273 and Cys276 together coordinate Zn(2+).

This sequence belongs to the arsA ATPase family. As to quaternary structure, homodimer.

The protein localises to the cytoplasm. The protein resides in the endoplasmic reticulum. In terms of biological role, ATPase required for the post-translational delivery of tail-anchored (TA) proteins to the endoplasmic reticulum. Recognizes and selectively binds the transmembrane domain of TA proteins in the cytosol. This complex then targets to the endoplasmic reticulum by membrane-bound receptors, where the tail-anchored protein is released for insertion. This process is regulated by ATP binding and hydrolysis. ATP binding drives the homodimer towards the closed dimer state, facilitating recognition of newly synthesized TA membrane proteins. ATP hydrolysis is required for insertion. Subsequently, the homodimer reverts towards the open dimer state, lowering its affinity for the membrane-bound receptor, and returning it to the cytosol to initiate a new round of targeting. The protein is ATPase GET3 of Mycosarcoma maydis (Corn smut fungus).